A 647-amino-acid polypeptide reads, in one-letter code: Acetyl-coenzyme A synthetase (647 aa).

CoA-binding positions include 189-192 (RGGK), Thr-307, and Asn-331. ATP is bound by residues 383–385 (GEP), 407–412 (DTWWQT), Asp-496, and Arg-511. Ser-519 is a binding site for CoA. An ATP-binding site is contributed by Arg-522. The Mg(2+) site is built by His-535 and Val-538. Arg-580 is a CoA binding site. Residue Lys-605 is modified to N6-acetyllysine.

It belongs to the ATP-dependent AMP-binding enzyme family. Mg(2+) is required as a cofactor. Post-translationally, acetylated. Deacetylation by the SIR2-homolog deacetylase activates the enzyme.

It catalyses the reaction acetate + ATP + CoA = acetyl-CoA + AMP + diphosphate. Its function is as follows. Catalyzes the conversion of acetate into acetyl-CoA (AcCoA), an essential intermediate at the junction of anabolic and catabolic pathways. AcsA undergoes a two-step reaction. In the first half reaction, AcsA combines acetate with ATP to form acetyl-adenylate (AcAMP) intermediate. In the second half reaction, it can then transfer the acetyl group from AcAMP to the sulfhydryl group of CoA, forming the product AcCoA. The protein is Acetyl-coenzyme A synthetase of Syntrophus aciditrophicus (strain SB).